The sequence spans 130 residues: Small ribosomal subunit protein uS11 (130 aa).

Belongs to the universal ribosomal protein uS11 family. In terms of assembly, part of the 30S ribosomal subunit. Interacts with proteins S7 and S18. Binds to IF-3.

Its function is as follows. Located on the platform of the 30S subunit, it bridges several disparate RNA helices of the 16S rRNA. Forms part of the Shine-Dalgarno cleft in the 70S ribosome. The polypeptide is Small ribosomal subunit protein uS11 (Campylobacter curvus (strain 525.92)).